Here is a 307-residue protein sequence, read N- to C-terminus: UDP-3-O-acyl-N-acetylglucosamine deacetylase (307 aa).

The Zn(2+) site is built by His-80, His-239, and Asp-243. His-266 (proton donor) is an active-site residue.

It belongs to the LpxC family. Zn(2+) serves as cofactor.

It catalyses the reaction a UDP-3-O-[(3R)-3-hydroxyacyl]-N-acetyl-alpha-D-glucosamine + H2O = a UDP-3-O-[(3R)-3-hydroxyacyl]-alpha-D-glucosamine + acetate. The protein operates within glycolipid biosynthesis; lipid IV(A) biosynthesis; lipid IV(A) from (3R)-3-hydroxytetradecanoyl-[acyl-carrier-protein] and UDP-N-acetyl-alpha-D-glucosamine: step 2/6. Functionally, catalyzes the hydrolysis of UDP-3-O-myristoyl-N-acetylglucosamine to form UDP-3-O-myristoylglucosamine and acetate, the committed step in lipid A biosynthesis. The polypeptide is UDP-3-O-acyl-N-acetylglucosamine deacetylase (Neisseria gonorrhoeae (strain ATCC 700825 / FA 1090)).